The following is a 757-amino-acid chain: 5-methyltetrahydropteroyltriglutamate--homocysteine methyltransferase (757 aa).

Residues 16–19 (RELK) and K112 contribute to the 5-methyltetrahydropteroyltri-L-glutamate site. Residues 432 to 434 (IGS) and E485 each bind L-homocysteine. L-methionine-binding positions include 432–434 (IGS) and E485. Residues 516-517 (RC) and W562 each bind 5-methyltetrahydropteroyltri-L-glutamate. D600 serves as a coordination point for L-homocysteine. D600 contacts L-methionine. E606 lines the 5-methyltetrahydropteroyltri-L-glutamate pocket. 3 residues coordinate Zn(2+): H642, C644, and E666. H695 functions as the Proton donor in the catalytic mechanism. C727 contributes to the Zn(2+) binding site.

It belongs to the vitamin-B12 independent methionine synthase family. Zn(2+) is required as a cofactor.

It carries out the reaction 5-methyltetrahydropteroyltri-L-glutamate + L-homocysteine = tetrahydropteroyltri-L-glutamate + L-methionine. The protein operates within amino-acid biosynthesis; L-methionine biosynthesis via de novo pathway; L-methionine from L-homocysteine (MetE route): step 1/1. Catalyzes the transfer of a methyl group from 5-methyltetrahydrofolate to homocysteine resulting in methionine formation. The protein is 5-methyltetrahydropteroyltriglutamate--homocysteine methyltransferase of Actinobacillus pleuropneumoniae serotype 5b (strain L20).